The following is a 160-amino-acid chain: Cyclic pyranopterin monophosphate synthase (160 aa).

Residues 74–76 and 112–113 each bind substrate; these read LSH and ME. Residue Asp127 is part of the active site.

Belongs to the MoaC family. In terms of assembly, homohexamer; trimer of dimers.

The enzyme catalyses (8S)-3',8-cyclo-7,8-dihydroguanosine 5'-triphosphate = cyclic pyranopterin phosphate + diphosphate. It participates in cofactor biosynthesis; molybdopterin biosynthesis. Its function is as follows. Catalyzes the conversion of (8S)-3',8-cyclo-7,8-dihydroguanosine 5'-triphosphate to cyclic pyranopterin monophosphate (cPMP). The sequence is that of Cyclic pyranopterin monophosphate synthase from Trichlorobacter lovleyi (strain ATCC BAA-1151 / DSM 17278 / SZ) (Geobacter lovleyi).